The sequence spans 618 residues: Chaperone protein HscA homolog (618 aa).

The protein belongs to the heat shock protein 70 family.

Chaperone involved in the maturation of iron-sulfur cluster-containing proteins. Has a low intrinsic ATPase activity which is markedly stimulated by HscB. This is Chaperone protein HscA homolog from Methylibium petroleiphilum (strain ATCC BAA-1232 / LMG 22953 / PM1).